The following is a 127-amino-acid chain: Large-conductance mechanosensitive channel (127 aa).

3 consecutive transmembrane segments (helical) span residues 8-28 (FAFK…AAFG), 30-50 (IVTA…LSLI), and 70-90 (IGVL…LFLF).

It belongs to the MscL family. In terms of assembly, homopentamer.

Its subcellular location is the cell membrane. In terms of biological role, channel that opens in response to stretch forces in the membrane lipid bilayer. May participate in the regulation of osmotic pressure changes within the cell. The protein is Large-conductance mechanosensitive channel of Herpetosiphon aurantiacus (strain ATCC 23779 / DSM 785 / 114-95).